The following is a 134-amino-acid chain: Holo-[acyl-carrier-protein] synthase (134 aa).

2 residues coordinate Mg(2+): Asp-8 and Glu-57.

It belongs to the P-Pant transferase superfamily. AcpS family. It depends on Mg(2+) as a cofactor.

Its subcellular location is the cytoplasm. The catalysed reaction is apo-[ACP] + CoA = holo-[ACP] + adenosine 3',5'-bisphosphate + H(+). Transfers the 4'-phosphopantetheine moiety from coenzyme A to a Ser of acyl-carrier-protein. The sequence is that of Holo-[acyl-carrier-protein] synthase from Agrobacterium fabrum (strain C58 / ATCC 33970) (Agrobacterium tumefaciens (strain C58)).